The chain runs to 183 residues: Ion-translocating oxidoreductase complex subunit B (183 aa).

The interval 1–23 (MLSALLVMAAIAVVLGAALGFAA) is hydrophobic. The region spanning 29–88 (EGDPLVDKIDAILPQTQCGQCGYPGCKPYAQAIAQGEADINQCPPGGEEGVRKLADLLGR) is the 4Fe-4S domain. [4Fe-4S] cluster contacts are provided by Cys-46, Cys-49, Cys-54, Cys-71, Cys-113, Cys-116, Cys-119, Cys-123, Cys-143, Cys-146, Cys-149, and Cys-153. 4Fe-4S ferredoxin-type domains lie at 104–133 (AVAY…GAAK) and 135–163 (MHTV…MEPV).

It belongs to the 4Fe4S bacterial-type ferredoxin family. RnfB subfamily. As to quaternary structure, the complex is composed of six subunits: RnfA, RnfB, RnfC, RnfD, RnfE and RnfG. Requires [4Fe-4S] cluster as cofactor.

Its subcellular location is the cell inner membrane. Its function is as follows. Part of a membrane-bound complex that couples electron transfer with translocation of ions across the membrane. The chain is Ion-translocating oxidoreductase complex subunit B from Azoarcus sp. (strain BH72).